The sequence spans 88 residues: MASLGSSAGGRRPTVLLQIALFVVVAAIIINSSVCLGATAVHDAAASGTGALDPNVPAVPTPGGAGQPYTGRGCRTVYGCRPPAGGQP.

The Cytoplasmic segment spans residues 1-13 (MASLGSSAGGRRP). A helical transmembrane segment spans residues 14–35 (TVLLQIALFVVVAAIIINSSVC). Topologically, residues 36-88 (LGATAVHDAAASGTGALDPNVPAVPTPGGAGQPYTGRGCRTVYGCRPPAGGQP) are extracellular.

The protein localises to the membrane. Associated with pathogen defense. The protein is Protein WIR1A (WIR1A) of Triticum aestivum (Wheat).